The primary structure comprises 327 residues: tRNA N6-adenosine threonylcarbamoyltransferase (327 aa).

Residues histidine 109 and histidine 113 each coordinate Fe cation. Substrate is bound by residues 132-136 (MVSGG), aspartate 165, glycine 178, aspartate 182, and asparagine 268. Aspartate 296 lines the Fe cation pocket.

This sequence belongs to the KAE1 / TsaD family. In terms of assembly, forms a hexamer composed of two TsaB, TsaD and TsaE trimers. It depends on Fe(2+) as a cofactor.

It is found in the cytoplasm. It catalyses the reaction L-threonylcarbamoyladenylate + adenosine(37) in tRNA = N(6)-L-threonylcarbamoyladenosine(37) in tRNA + AMP + H(+). Functionally, required for the formation of a threonylcarbamoyl group on adenosine at position 37 (t(6)A37) in tRNAs that read codons beginning with adenine. Is involved in the transfer of the threonylcarbamoyl moiety of threonylcarbamoyl-AMP (TC-AMP) to the N6 group of A37, together with TsaE and TsaB. TsaD likely plays a direct catalytic role in this reaction. In Thermotoga maritima (strain ATCC 43589 / DSM 3109 / JCM 10099 / NBRC 100826 / MSB8), this protein is tRNA N6-adenosine threonylcarbamoyltransferase.